We begin with the raw amino-acid sequence, 51 residues long: Large ribosomal subunit protein bL33 (51 aa).

The protein belongs to the bacterial ribosomal protein bL33 family.

In Psychrobacter sp. (strain PRwf-1), this protein is Large ribosomal subunit protein bL33.